The chain runs to 711 residues: Double-stranded RNA-specific editase 1 (711 aa).

The tract at residues M1 to L78 is disordered. A compositionally biased stretch (basic residues) spans S63–T73. Positions L78 to Q144 constitute a DRBM 1 domain. Interaction with substrate RNA regions lie at residues L83–E88 and V104–H105. S149 carries the post-translational modification Phosphoserine. A disordered region spans residues L176–P220. Over residues V192–V213 the composition is skewed to low complexity. The DRBM 2 domain maps to P231–N298. Interaction with substrate RNA stretches follow at residues V237 to E242 and H259. The A to I editase domain occupies S370 to F707. H394 provides a ligand contact to Zn(2+). E396 (proton donor) is an active-site residue. Positions 400 and 401 each coordinate 1D-myo-inositol hexakisphosphate. C451 and C526 together coordinate Zn(2+). The 1D-myo-inositol hexakisphosphate site is built by K529, R532, K639, K672, K682, and K700.

As to quaternary structure, homodimer. Homodimerization is essential for its catalytic activity. Can form heterodimers with isoform 5 of ADAR/ADAR1. 1D-myo-inositol hexakisphosphate is required as a cofactor.

Its subcellular location is the nucleus. The protein resides in the nucleolus. It catalyses the reaction adenosine in double-stranded RNA + H2O + H(+) = inosine in double-stranded RNA + NH4(+). Its function is as follows. Catalyzes the hydrolytic deamination of adenosine to inosine in double-stranded RNA (dsRNA) referred to as A-to-I RNA editing. This may affect gene expression and function in a number of ways that include mRNA translation by changing codons and hence the amino acid sequence of proteins; pre-mRNA splicing by altering splice site recognition sequences; RNA stability by changing sequences involved in nuclease recognition; genetic stability in the case of RNA virus genomes by changing sequences during viral RNA replication; and RNA structure-dependent activities such as microRNA production or targeting or protein-RNA interactions. Can edit both viral and cellular RNAs and can edit RNAs at multiple sites (hyper-editing) or at specific sites (site-specific editing). Its cellular RNA substrates include: bladder cancer-associated protein (BLCAP), neurotransmitter receptors for glutamate (GRIA2 and GRIK2) and serotonin (HTR2C), GABA receptor (GABRA3) and potassium voltage-gated channel (KCNA1). Site-specific RNA editing of transcripts encoding these proteins results in amino acid substitutions which consequently alter their functional activities. Edits GRIA2 at both the Q/R and R/G sites efficiently but converts the adenosine in hotspot1 much less efficiently. Can inhibit cell proliferation and migration and can stimulate exocytosis. This chain is Double-stranded RNA-specific editase 1 (Adarb1), found in Mus musculus (Mouse).